Reading from the N-terminus, the 341-residue chain is Large ribosomal subunit protein uL3 (341 aa).

Disordered regions lie at residues 1–31 (MGHR…SPRS) and 234–261 (HRKG…GQMG).

Belongs to the universal ribosomal protein uL3 family. Part of the 50S ribosomal subunit. Forms a cluster with proteins L14 and L24e.

Functionally, one of the primary rRNA binding proteins, it binds directly near the 3'-end of the 23S rRNA, where it nucleates assembly of the 50S subunit. The polypeptide is Large ribosomal subunit protein uL3 (Metallosphaera sedula (strain ATCC 51363 / DSM 5348 / JCM 9185 / NBRC 15509 / TH2)).